Consider the following 406-residue polypeptide: Prisilkin-39 (406 aa).

A signal peptide spans 1-19 (MKGFLTLLLVCAILSTGYC). 2 helical membrane passes run 26-48 (ALTG…GAGA) and 58-80 (VGVG…YGGY). The tract at residues 78 to 197 (GGYSGYGYGY…YSGYSYGYPT (120 aa)) is 10 X 12 AA tandem repeat of G-G-Y-[SG]-G-Y-[GS]-Y-G-Y-P-[AT].

In terms of tissue distribution, expression is confined to the prism and organic layers of the shell with no expression detected in the nacreous shell layer. Also expressed in the mantle edge, extrapallial fluid, hemolymph and, to a lesser extent, in the viscus (at protein level). In the mantle, localizes to inner epithelial cells of the outer fold and the outer epithelial cells of the middle fold at the bottom of the periostracal groove.

The protein localises to the membrane. Functionally, binds chitin and may serve as a framework constituent participating in shell formation. Inhibits aragonite precipitation and may regulate aragonite growth during shell layer formation. Does not affect calcite crystallization. This chain is Prisilkin-39, found in Pinctada fucata (Akoya pearl oyster).